A 163-amino-acid polypeptide reads, in one-letter code: Neurotrophin-3 (163 aa).

An N-terminal signal peptide occupies residues 1–3; sequence IQS. Residues 4–119 constitute a propeptide that is removed on maturation; that stretch reads TSMDQGILTE…VLNRTSRRKR (116 aa). An N-linked (GlcNAc...) asparagine glycan is attached at Asn112. The interval 113 to 133 is disordered; it reads RTSRRKREGKSHRGEYSVCDS. A compositionally biased stretch (basic and acidic residues) spans 123-133; the sequence is SHRGEYSVCDS.

It belongs to the NGF-beta family.

It localises to the secreted. Seems to promote the survival of visceral and proprioceptive sensory neurons. The protein is Neurotrophin-3 (NTF3) of Charina bottae (Northern rubber boa).